The chain runs to 127 residues: Fluoride-specific ion channel FluC (127 aa).

Helical transmembrane passes span 4–24 (LLLAVFIGGGTGSVARWFLSM), 35–55 (LGTLTANLIGAFIIGVGLAWF), 71–91 (TGFCGGLTTFSTFSAEVVFLL), and 103–123 (IAVNMLGSFAMTALAFWLFSA). 2 residues coordinate Na(+): G75 and T78.

The protein belongs to the fluoride channel Fluc/FEX (TC 1.A.43) family.

It localises to the cell inner membrane. The enzyme catalyses fluoride(in) = fluoride(out). Na(+) is not transported, but it plays an essential structural role and its presence is essential for fluoride channel function. Fluoride-specific ion channel. Important for reducing fluoride concentration in the cell, thus reducing its toxicity. In Enterobacter sp. (strain 638), this protein is Fluoride-specific ion channel FluC.